We begin with the raw amino-acid sequence, 181 residues long: uncharacterized protein (181 aa).

It to M.jannaschii MJ1106.

This is an uncharacterized protein from Methanothermobacter thermautotrophicus (strain ATCC 29096 / DSM 1053 / JCM 10044 / NBRC 100330 / Delta H) (Methanobacterium thermoautotrophicum).